A 530-amino-acid chain; its full sequence is AarF domain-containing protein kinase 1 (530 aa).

Positions 155–467 (SFDDTPLGTA…ASSFLNMSRC (313 aa)) constitute a Protein kinase domain. Residues 161–169 (LGTASLAQV) and Lys183 contribute to the ATP site. Catalysis depends on Asp315, which acts as the Proton acceptor.

The protein belongs to the protein kinase superfamily. ADCK protein kinase family.

The protein resides in the mitochondrion. Functionally, appears to be essential for maintaining mitochondrial cristae formation and mitochondrial function by acting via YME1L1 in a kinase-independent manner to regulate essential mitochondrial structural proteins OPA1 and IMMT. The action of this enzyme is not yet clear. It is not known if it has protein kinase activity and what type of substrate it would phosphorylate (Ser, Thr or Tyr). The sequence is that of AarF domain-containing protein kinase 1 from Homo sapiens (Human).